The sequence spans 93 residues: Conotoxin F_Vc1 (93 aa).

Positions M1–A22 are cleaved as a signal peptide. A propeptide spanning residues E23–R33 is cleaved from the precursor.

Belongs to the conotoxin F superfamily. Post-translationally, contains 4 disulfide bonds. Expressed by the venom duct.

The protein localises to the secreted. This Conus victoriae (Queen Victoria cone) protein is Conotoxin F_Vc1.